Consider the following 313-residue polypeptide: Glyoxylate/hydroxypyruvate reductase A (313 aa).

Arg228 is an active-site residue. His276 (proton donor) is an active-site residue.

It belongs to the D-isomer specific 2-hydroxyacid dehydrogenase family. GhrA subfamily.

It is found in the cytoplasm. It catalyses the reaction glycolate + NADP(+) = glyoxylate + NADPH + H(+). It carries out the reaction (R)-glycerate + NAD(+) = 3-hydroxypyruvate + NADH + H(+). The catalysed reaction is (R)-glycerate + NADP(+) = 3-hydroxypyruvate + NADPH + H(+). Functionally, catalyzes the NADPH-dependent reduction of glyoxylate and hydroxypyruvate into glycolate and glycerate, respectively. The protein is Glyoxylate/hydroxypyruvate reductase A of Yersinia enterocolitica serotype O:8 / biotype 1B (strain NCTC 13174 / 8081).